Consider the following 64-residue polypeptide: Conotoxin VnMRCL-04 (64 aa).

The N-terminal stretch at 1–22 is a signal peptide; the sequence is MRCLPVFVILLLLIASAPSVDA. A propeptide spanning residues 23 to 48 is cleaved from the precursor; it reads RPKTKDDVPLASFHGNAERTLLNILR. Position 63 is a tryptophan amide (Trp63).

Belongs to the conotoxin T superfamily. Post-translationally, contains 2 disulfide bonds that can be either 'C1-C3, C2-C4' or 'C1-C4, C2-C3', since these disulfide connectivities have been observed for conotoxins with cysteine framework V (for examples, see AC P0DQQ7 and AC P81755). As to expression, expressed by the venom duct.

The protein resides in the secreted. This chain is Conotoxin VnMRCL-04, found in Conus ventricosus (Mediterranean cone).